The chain runs to 615 residues: DNA mismatch repair protein MutL (615 aa).

The disordered stretch occupies residues 369-397 (REPVAPRYTPAPASGSRPAAPWPNAQPGY). Residues 378 to 391 (PAPASGSRPAAPWP) are compositionally biased toward low complexity.

Belongs to the DNA mismatch repair MutL/HexB family.

This protein is involved in the repair of mismatches in DNA. It is required for dam-dependent methyl-directed DNA mismatch repair. May act as a 'molecular matchmaker', a protein that promotes the formation of a stable complex between two or more DNA-binding proteins in an ATP-dependent manner without itself being part of a final effector complex. The protein is DNA mismatch repair protein MutL of Escherichia coli (strain SMS-3-5 / SECEC).